The chain runs to 118 residues: Large ribosomal subunit protein bL20 (118 aa).

Belongs to the bacterial ribosomal protein bL20 family.

Functionally, binds directly to 23S ribosomal RNA and is necessary for the in vitro assembly process of the 50S ribosomal subunit. It is not involved in the protein synthesizing functions of that subunit. The chain is Large ribosomal subunit protein bL20 from Desulfotalea psychrophila (strain LSv54 / DSM 12343).